The following is a 762-amino-acid chain: Polyribonucleotide nucleotidyltransferase (762 aa).

Residues D531 and D537 each contribute to the Mg(2+) site. The KH domain maps to 597–656 (PRVTTIKVPVDKIGEVIGPKGKVINSITEETRAQISIEDDGTVFVGATDGPSAQAAIDKI). The S1 motif domain maps to 668–737 (GERFLGTVVK…KRGKISLVLV (70 aa)).

It belongs to the polyribonucleotide nucleotidyltransferase family. Mg(2+) is required as a cofactor.

The protein resides in the cytoplasm. The catalysed reaction is RNA(n+1) + phosphate = RNA(n) + a ribonucleoside 5'-diphosphate. In terms of biological role, involved in mRNA degradation. Catalyzes the phosphorolysis of single-stranded polyribonucleotides processively in the 3'- to 5'-direction. This Mycobacterium ulcerans (strain Agy99) protein is Polyribonucleotide nucleotidyltransferase.